Consider the following 162-residue polypeptide: MTNFLIVVATVLVMELTAYSVHRWIMHGPLGWGWHKSHHEEHDHALEKNDLYGLVFAVIATVLFTVGWIWAPVLWWIALGMTVYGLIYFVLHDGLVHQRWPFRYIPRKGYARRLYQAHRLHHAVEGRDHCVSFGFIYAPPVDKLKQDLKMSGVLRAEAQERT.

One can recognise a Fatty acid hydroxylase domain in the interval 8 to 135; sequence VATVLVMELT…GRDHCVSFGF (128 aa).

The protein belongs to the sterol desaturase family.

It carries out the reaction all-trans-beta-carotene + 4 reduced [2Fe-2S]-[ferredoxin] + 2 O2 + 4 H(+) = all-trans-zeaxanthin + 4 oxidized [2Fe-2S]-[ferredoxin] + 2 H2O. It functions in the pathway carotenoid biosynthesis; astaxanthin biosynthesis. In terms of biological role, catalyzes the hydroxylation reaction from beta-carotene to zeaxanthin via beta-cryptoxanthin. The protein is Beta-carotene hydroxylase (crtZ) of Paracoccus sp. (strain N81106 / MBIC 01143) (Agrobacterium aurantiacum).